The sequence spans 544 residues: CTP synthase (544 aa).

The amidoligase domain stretch occupies residues 1 to 267 (MSKFIFVTGG…GDLLVSRLHL (267 aa)). Residue S13 coordinates CTP. Position 13 (S13) interacts with UTP. Position 14–19 (14–19 (SVGKGI)) interacts with ATP. Y54 contributes to the L-glutamine binding site. D71 is a binding site for ATP. Mg(2+)-binding residues include D71 and E141. CTP-binding positions include 148–150 (DIE), 188–193 (KTKPTQ), and K224. Residues 188–193 (KTKPTQ) and K224 each bind UTP. The Glutamine amidotransferase type-1 domain occupies 299 to 534 (YVELKDAYYS…INAAKKVIRD (236 aa)). G354 serves as a coordination point for L-glutamine. C381 (nucleophile; for glutamine hydrolysis) is an active-site residue. L-glutamine-binding positions include 382 to 385 (LGMQ), E405, and R462. Active-site residues include H507 and E509.

It belongs to the CTP synthase family. Homotetramer.

It catalyses the reaction UTP + L-glutamine + ATP + H2O = CTP + L-glutamate + ADP + phosphate + 2 H(+). The enzyme catalyses L-glutamine + H2O = L-glutamate + NH4(+). The catalysed reaction is UTP + NH4(+) + ATP = CTP + ADP + phosphate + 2 H(+). The protein operates within pyrimidine metabolism; CTP biosynthesis via de novo pathway; CTP from UDP: step 2/2. Allosterically activated by GTP, when glutamine is the substrate; GTP has no effect on the reaction when ammonia is the substrate. The allosteric effector GTP functions by stabilizing the protein conformation that binds the tetrahedral intermediate(s) formed during glutamine hydrolysis. Inhibited by the product CTP, via allosteric rather than competitive inhibition. Catalyzes the ATP-dependent amination of UTP to CTP with either L-glutamine or ammonia as the source of nitrogen. Regulates intracellular CTP levels through interactions with the four ribonucleotide triphosphates. The polypeptide is CTP synthase (Dehalococcoides mccartyi (strain ATCC BAA-2100 / JCM 16839 / KCTC 5957 / BAV1)).